We begin with the raw amino-acid sequence, 153 residues long: Flagellar assembly factor FliW (153 aa).

The protein belongs to the FliW family. In terms of assembly, interacts with translational regulator CsrA and flagellin(s).

It is found in the cytoplasm. In terms of biological role, acts as an anti-CsrA protein, binds CsrA and prevents it from repressing translation of its target genes, one of which is flagellin. Binds to flagellin and participates in the assembly of the flagellum. This Leptospira biflexa serovar Patoc (strain Patoc 1 / Ames) protein is Flagellar assembly factor FliW.